A 244-amino-acid chain; its full sequence is 1-(5-phosphoribosyl)-5-[(5-phosphoribosylamino)methylideneamino] imidazole-4-carboxamide isomerase (244 aa).

Asp8 (proton acceptor) is an active-site residue. Asp129 serves as the catalytic Proton donor.

It belongs to the HisA/HisF family.

It localises to the cytoplasm. It carries out the reaction 1-(5-phospho-beta-D-ribosyl)-5-[(5-phospho-beta-D-ribosylamino)methylideneamino]imidazole-4-carboxamide = 5-[(5-phospho-1-deoxy-D-ribulos-1-ylimino)methylamino]-1-(5-phospho-beta-D-ribosyl)imidazole-4-carboxamide. It participates in amino-acid biosynthesis; L-histidine biosynthesis; L-histidine from 5-phospho-alpha-D-ribose 1-diphosphate: step 4/9. The polypeptide is 1-(5-phosphoribosyl)-5-[(5-phosphoribosylamino)methylideneamino] imidazole-4-carboxamide isomerase (Chelativorans sp. (strain BNC1)).